A 715-amino-acid chain; its full sequence is Palmitoyltransferase ZDHHC5 (715 aa).

At 1–13 (MPAESGKRFKPSK) the chain is on the cytoplasmic side. A helical transmembrane segment spans residues 14 to 34 (YVPVSAAAIFLVGATTLFFAF). Residues 35-52 (TCPGLSLNVSPAVPIYNA) lie on the Extracellular side of the membrane. Residues 53–73 (IMFLFVLANFSMATFMDPGIF) traverse the membrane as a helical segment. The Cytoplasmic segment spans residues 74–148 (PRAEEDEDKE…NCIGRRNYRY (75 aa)). Phosphotyrosine is present on Tyr-91. Positions 104-154 (KWCATCRFYRPPRCSHCSVCDNCVEEFDHHCPWVNNCIGRRNYRYFFLFLL) constitute a DHHC domain. The S-palmitoyl cysteine intermediate role is filled by Cys-134. A helical membrane pass occupies residues 149-169 (FFLFLLSLTAHIMGVFGFGLL). The Extracellular portion of the chain corresponds to 170–191 (YVLYHIEELSGVRTAVTMAVMC). Residues 192–212 (VAGLFFIPVAGLTGFHVVLVA) traverse the membrane as a helical segment. Over 213-715 (RGRTTNEQVT…VGGTTYEISV (503 aa)) the chain is Cytoplasmic. Phosphoserine is present on Ser-247. The disordered stretch occupies residues 289 to 715 (GELRRTKSKG…VGGTTYEISV (427 aa)). Thr-294 carries the phosphothreonine modification. Phosphoserine occurs at positions 296 and 299. Thr-303 carries the phosphothreonine modification. Ser-345 carries the post-translational modification Phosphoserine. Phosphothreonine occurs at positions 348 and 350. The span at 359 to 373 (SSSSTSAAMPHSSSA) shows a compositional bias: low complexity. 4 positions are modified to phosphoserine: Ser-380, Ser-398, Ser-406, and Ser-409. A Phosphothreonine modification is found at Thr-411. Phosphoserine is present on residues Ser-415, Ser-425, Ser-429, and Ser-432. The span at 422 to 432 (SSGSRSSSLKS) shows a compositional bias: low complexity. Thr-436 carries the phosphothreonine modification. Polar residues predominate over residues 442 to 478 (QLQSIRSEGTTSTSYKSLANQTRNGSLSYDSLLTPSD). Phosphoserine is present on residues Ser-529 and Ser-554. The span at 581–597 (PRTSSSSDDSKRSPLSK) shows a compositional bias: low complexity. Arg-617 carries the omega-N-methylarginine modification. Residue Ser-621 is modified to Phosphoserine. Thr-659 carries the phosphothreonine modification. A compositionally biased stretch (polar residues) spans 666–677 (LKTTYSKSNGQP). Ser-684 and Ser-694 each carry phosphoserine. The residue at position 697 (Arg-697) is an Omega-N-methylarginine.

This sequence belongs to the DHHC palmitoyltransferase family. ERF2/ZDHHC9 subfamily. Post-translationally, phosphorylation regulates association with endocytic proteins and its subcellular localization. Phosphorylation by LYN during fatty acid uptake leads to inactivation of the activity. Autopalmitoylated. Palmitoylation of the C-terminal tail regulates stimulation-dependent plasma membrane motility. As to expression, highly enriched in brain, detectable in liver and heart, and undetectable in most other tissues.

Its subcellular location is the cell membrane. The catalysed reaction is L-cysteinyl-[protein] + hexadecanoyl-CoA = S-hexadecanoyl-L-cysteinyl-[protein] + CoA. Functionally, palmitoyltransferase that catalyzes the addition of palmitate onto various protein substrates such as CTNND2, CD36, GSDMD, NLRP3, NOD1, NOD2, STAT3 and S1PR1 thus plays a role in various biological processes including cell adhesion, inflammation, fatty acid uptake, bacterial sensing or cardiac functions. Plays an important role in the regulation of synapse efficacy by mediating palmitoylation of delta-catenin/CTNND2, thereby increasing synaptic delivery and surface stabilization of alpha-amino-3-hydroxy-5-methyl-4-isoxazole propionic acid receptors (AMPARs). Under basal conditions, remains at the synaptic membrane through FYN-mediated phosphorylation that prevents association with endocytic proteins. Neuronal activity enhances the internalization and trafficking of DHHC5 from spines to dendritic shafts where it palmitoylates delta-catenin/CTNND2. Regulates cell adhesion at the plasma membrane by palmitoylating GOLGA7B and DSG2. Plays a role in innate immune response by mediating the palmitoylation of NOD1 and NOD2 and their proper recruitment to the bacterial entry site and phagosomes. Also participates in fatty acid uptake by palmitoylating CD36 and thereby targeting it to the plasma membrane. Upon binding of fatty acids to CD36, gets phosphorylated by LYN leading to inactivation and subsequent CD36 caveolar endocytosis. Controls oligodendrocyte development by catalyzing STAT3 palmitoylation. Acts as a regulator of inflammatory response by mediating palmitoylation of NLRP3 and GSDMD. Palmitoylates NLRP3 to promote inflammasome assembly and activation. Activates pyroptosis by catalyzing palmitoylation of gasdermin-D (GSDMD), thereby promoting membrane translocation and pore formation of GSDMD. The sequence is that of Palmitoyltransferase ZDHHC5 (Zdhhc5) from Mus musculus (Mouse).